We begin with the raw amino-acid sequence, 178 residues long: ATP synthase subunit delta (178 aa).

Belongs to the ATPase delta chain family. As to quaternary structure, F-type ATPases have 2 components, F(1) - the catalytic core - and F(0) - the membrane proton channel. F(1) has five subunits: alpha(3), beta(3), gamma(1), delta(1), epsilon(1). F(0) has three main subunits: a(1), b(2) and c(10-14). The alpha and beta chains form an alternating ring which encloses part of the gamma chain. F(1) is attached to F(0) by a central stalk formed by the gamma and epsilon chains, while a peripheral stalk is formed by the delta and b chains.

It localises to the cell membrane. In terms of biological role, f(1)F(0) ATP synthase produces ATP from ADP in the presence of a proton or sodium gradient. F-type ATPases consist of two structural domains, F(1) containing the extramembraneous catalytic core and F(0) containing the membrane proton channel, linked together by a central stalk and a peripheral stalk. During catalysis, ATP synthesis in the catalytic domain of F(1) is coupled via a rotary mechanism of the central stalk subunits to proton translocation. Functionally, this protein is part of the stalk that links CF(0) to CF(1). It either transmits conformational changes from CF(0) to CF(1) or is implicated in proton conduction. The polypeptide is ATP synthase subunit delta (Streptococcus thermophilus (strain ATCC BAA-250 / LMG 18311)).